The primary structure comprises 96 residues: Co-chaperonin GroES (96 aa).

The protein belongs to the GroES chaperonin family. As to quaternary structure, heptamer of 7 subunits arranged in a ring. Interacts with the chaperonin GroEL.

The protein resides in the cytoplasm. In terms of biological role, together with the chaperonin GroEL, plays an essential role in assisting protein folding. The GroEL-GroES system forms a nano-cage that allows encapsulation of the non-native substrate proteins and provides a physical environment optimized to promote and accelerate protein folding. GroES binds to the apical surface of the GroEL ring, thereby capping the opening of the GroEL channel. This chain is Co-chaperonin GroES, found in Idiomarina loihiensis (strain ATCC BAA-735 / DSM 15497 / L2-TR).